The chain runs to 271 residues: N-acetyltransferase ECO1 (271 aa).

Residues 1 to 38 (MKTYRAKRKYLSESEDDVFSSSPTQSPETSPLQPPNES) form a disordered region. Over residues 20–31 (SSSPTQSPETSP) the composition is skewed to low complexity. A CCHH-type zinc finger spans residues 80 to 104 (TTCKTCGMTYQVAYGPDISAHKSFH).

This sequence belongs to the acetyltransferase family. ECO subfamily.

It localises to the nucleus. Probable acetyltransferase required for the establishment of sister chromatid cohesion and couple the processes of cohesion and DNA replication to ensure that only sister chromatids become paired together. In contrast to the structural cohesins, the deposition and establishment factors are required only during S phase. Acts by acetylating the cohesin complex component SMC3. This Yarrowia lipolytica (strain CLIB 122 / E 150) (Yeast) protein is N-acetyltransferase ECO1 (ECO1).